A 202-amino-acid polypeptide reads, in one-letter code: Thymidylate kinase (202 aa).

Position 7–14 (7–14) interacts with ATP; it reads GTEGVGKT.

The protein belongs to the thymidylate kinase family.

It carries out the reaction dTMP + ATP = dTDP + ADP. Its function is as follows. Phosphorylation of dTMP to form dTDP in both de novo and salvage pathways of dTTP synthesis. In Acinetobacter baylyi (strain ATCC 33305 / BD413 / ADP1), this protein is Thymidylate kinase.